The following is a 663-amino-acid chain: UvrABC system protein B (663 aa).

The region spanning 30–417 is the Helicase ATP-binding domain; the sequence is EGIKAGKRHQ…TDKMVEQIIR (388 aa). 43 to 50 contacts ATP; the sequence is GATGTGKT. The Beta-hairpin signature appears at 96-119; that stretch reads YYDYYQPEAYVPSTDTFIEKDASI. In terms of domain architecture, Helicase C-terminal spans 434-600; the sequence is QIDDLLSEIQ…TINKKIHDLI (167 aa). The 36-residue stretch at 627 to 662 folds into the UVR domain; it reads QKTIDNIEKEMKQAAKDLDFEKATELRDMLFELKAE.

This sequence belongs to the UvrB family. Forms a heterotetramer with UvrA during the search for lesions. Interacts with UvrC in an incision complex.

The protein resides in the cytoplasm. In terms of biological role, the UvrABC repair system catalyzes the recognition and processing of DNA lesions. A damage recognition complex composed of 2 UvrA and 2 UvrB subunits scans DNA for abnormalities. Upon binding of the UvrA(2)B(2) complex to a putative damaged site, the DNA wraps around one UvrB monomer. DNA wrap is dependent on ATP binding by UvrB and probably causes local melting of the DNA helix, facilitating insertion of UvrB beta-hairpin between the DNA strands. Then UvrB probes one DNA strand for the presence of a lesion. If a lesion is found the UvrA subunits dissociate and the UvrB-DNA preincision complex is formed. This complex is subsequently bound by UvrC and the second UvrB is released. If no lesion is found, the DNA wraps around the other UvrB subunit that will check the other stand for damage. The polypeptide is UvrABC system protein B (Staphylococcus aureus (strain COL)).